The sequence spans 388 residues: Leucine aminopeptidase 1 (388 aa).

The first 19 residues, M1–A19, serve as a signal peptide directing secretion. A propeptide spanning residues H20 to S88 is cleaved from the precursor. N-linked (GlcNAc...) asparagine glycosylation occurs at N98. 4 residues coordinate Zn(2+): H187, D206, E245, and D272. The cysteines at positions 321 and 325 are disulfide-linked. H354 contacts Zn(2+).

This sequence belongs to the peptidase M28 family. M28E subfamily. In terms of assembly, monomer. Zn(2+) is required as a cofactor.

The protein localises to the secreted. In terms of biological role, extracellular aminopeptidase that allows assimilation of proteinaceous substrates. In Leptosphaeria maculans (strain JN3 / isolate v23.1.3 / race Av1-4-5-6-7-8) (Blackleg fungus), this protein is Leucine aminopeptidase 1 (LAP1).